Reading from the N-terminus, the 55-residue chain is Large ribosomal subunit protein bL33 (55 aa).

Belongs to the bacterial ribosomal protein bL33 family.

The sequence is that of Large ribosomal subunit protein bL33 from Gluconobacter oxydans (strain 621H) (Gluconobacter suboxydans).